A 53-amino-acid polypeptide reads, in one-letter code: uncharacterized protein (53 aa).

The chain crosses the membrane as a helical span at residues 4–24 (FILLIVGFIYGAGGVLLYSVY).

The protein resides in the host membrane. This is an uncharacterized protein from Acidianus bottle-shaped virus (isolate Italy/Pozzuoli) (ABV).